Reading from the N-terminus, the 224-residue chain is Prothoracicotropic hormone (224 aa).

The signal sequence occupies residues 1–29 (MITRPIILVILCYAILMIVQSFVPKAVAL). 3 disulfide bridges follow: Cys132–Cys169, Cys155–Cys211, and Cys163–Cys213. Residue Asn156 is glycosylated (N-linked (GlcNAc...) asparagine).

Homodimer; disulfide-linked. As to expression, PTTH is synthesized by two dorsolateral neurosecretory cells of the Bombyx brain.

PTTH is a brain secretory polypeptide of insects which stimulates the prothoracic glands to produce and release ecdysone, the steroid essential to insect development. Its function is as follows. Peptides P2K and P6K are presumed to be cleaved post-translationally and may play some unknown physiologically or developmentally important functions. The chain is Prothoracicotropic hormone from Bombyx mori (Silk moth).